A 440-amino-acid polypeptide reads, in one-letter code: Ribosomal protein uS12 methylthiotransferase RimO (440 aa).

The 112-residue stretch at 5–116 (PTIAISHLGC…IVSVIERAEQ (112 aa)) folds into the MTTase N-terminal domain. [4Fe-4S] cluster is bound by residues C14, C50, C79, C154, C158, and C161. The Radical SAM core domain maps to 140-370 (TTTEGVAYLR…ALQQPISWRK (231 aa)). The region spanning 372–438 (QQEVGKTVEV…EYDLFGQVVS (67 aa)) is the TRAM domain.

It belongs to the methylthiotransferase family. RimO subfamily. The cofactor is [4Fe-4S] cluster.

The protein resides in the cytoplasm. It catalyses the reaction L-aspartate(89)-[ribosomal protein uS12]-hydrogen + (sulfur carrier)-SH + AH2 + 2 S-adenosyl-L-methionine = 3-methylsulfanyl-L-aspartate(89)-[ribosomal protein uS12]-hydrogen + (sulfur carrier)-H + 5'-deoxyadenosine + L-methionine + A + S-adenosyl-L-homocysteine + 2 H(+). Functionally, catalyzes the methylthiolation of an aspartic acid residue of ribosomal protein uS12. In Nostoc sp. (strain PCC 7120 / SAG 25.82 / UTEX 2576), this protein is Ribosomal protein uS12 methylthiotransferase RimO.